Here is a 209-residue protein sequence, read N- to C-terminus: Orotate phosphoribosyltransferase (209 aa).

5-phospho-alpha-D-ribose 1-diphosphate-binding positions include Arg96, Lys100, His102, and 122 to 130; that span reads EDLISTGGS. Ser126 is an orotate binding site.

The protein belongs to the purine/pyrimidine phosphoribosyltransferase family. PyrE subfamily. Homodimer. Mg(2+) is required as a cofactor.

It catalyses the reaction orotidine 5'-phosphate + diphosphate = orotate + 5-phospho-alpha-D-ribose 1-diphosphate. Its pathway is pyrimidine metabolism; UMP biosynthesis via de novo pathway; UMP from orotate: step 1/2. Functionally, catalyzes the transfer of a ribosyl phosphate group from 5-phosphoribose 1-diphosphate to orotate, leading to the formation of orotidine monophosphate (OMP). In Lactococcus lactis subsp. lactis (strain IL1403) (Streptococcus lactis), this protein is Orotate phosphoribosyltransferase.